A 152-amino-acid polypeptide reads, in one-letter code: Transcriptional repressor NrdR (152 aa).

A zinc finger lies at 3 to 34 (CPFCNHGELKVIDSRNSPEANAIKRRRECLRC). Residues 48–138 (IQVLKRDGRY…VYRRFRDVGE (91 aa)) form the ATP-cone domain.

It belongs to the NrdR family. Zn(2+) is required as a cofactor.

In terms of biological role, negatively regulates transcription of bacterial ribonucleotide reductase nrd genes and operons by binding to NrdR-boxes. This chain is Transcriptional repressor NrdR, found in Chlamydia muridarum (strain MoPn / Nigg).